The primary structure comprises 172 residues: MSSSQNNNSSWIDWFLGIKGNQFLCRVPTDYVQDTFNQMGLEYFSEILDVILKPVIDSSSGLLYGDEKKWYGMIHARYIRSERGLIAMHRKYMRGDFGSCPNISCDRQNTLPVGLSAVWGKSTVKIHCPRCKSNFHPKSDTQLDGAMFGPSFPDIFFSMLPNLTSPLDDPRT.

It belongs to the casein kinase 2 subunit beta family. Interacts in vitro with the casein kinase 2 alpha subunit (CkII-alpha). The relevance of such interaction is however unclear in vivo. As to expression, probably not expressed in wild-type flies. In males lacking the Y chromosome, it is testis-specific and constitutes the main component of star-shaped crystals.

In terms of biological role, unknown. In males lacking the Y chromosome, its strong overexpression leads to the appearance of proteinaceous star-shaped crystals in the primary spermatocytes causing meiotic drive, possibly by interfering with normal casein kinase 2 activity. In Drosophila melanogaster (Fruit fly), this protein is Stellate protein CG33239/CG33241 (Ste:CG33239).